The sequence spans 380 residues: Succinyl-diaminopimelate desuccinylase (380 aa).

Position 68 (His68) interacts with Zn(2+). Asp70 is a catalytic residue. Zn(2+) is bound at residue Asp101. Glu135 serves as the catalytic Proton acceptor. The Zn(2+) site is built by Glu136, Glu164, and His350.

The protein belongs to the peptidase M20A family. DapE subfamily. In terms of assembly, homodimer. The cofactor is Zn(2+). Co(2+) serves as cofactor.

It carries out the reaction N-succinyl-(2S,6S)-2,6-diaminopimelate + H2O = (2S,6S)-2,6-diaminopimelate + succinate. It functions in the pathway amino-acid biosynthesis; L-lysine biosynthesis via DAP pathway; LL-2,6-diaminopimelate from (S)-tetrahydrodipicolinate (succinylase route): step 3/3. Functionally, catalyzes the hydrolysis of N-succinyl-L,L-diaminopimelic acid (SDAP), forming succinate and LL-2,6-diaminopimelate (DAP), an intermediate involved in the bacterial biosynthesis of lysine and meso-diaminopimelic acid, an essential component of bacterial cell walls. The polypeptide is Succinyl-diaminopimelate desuccinylase (Tolumonas auensis (strain DSM 9187 / NBRC 110442 / TA 4)).